A 436-amino-acid chain; its full sequence is 3-ketoacyl-CoA thiolase (436 aa).

C99 functions as the Acyl-thioester intermediate in the catalytic mechanism. Residues H392 and C422 each act as proton acceptor in the active site.

The protein belongs to the thiolase-like superfamily. Thiolase family. As to quaternary structure, heterotetramer of two alpha chains (FadJ) and two beta chains (FadI).

It is found in the cytoplasm. It carries out the reaction an acyl-CoA + acetyl-CoA = a 3-oxoacyl-CoA + CoA. Its pathway is lipid metabolism; fatty acid beta-oxidation. Functionally, catalyzes the final step of fatty acid oxidation in which acetyl-CoA is released and the CoA ester of a fatty acid two carbons shorter is formed. The protein is 3-ketoacyl-CoA thiolase of Pseudoalteromonas atlantica (strain T6c / ATCC BAA-1087).